Reading from the N-terminus, the 476-residue chain is Bifunctional protein HldE (476 aa).

Positions 1–318 (MAQYSAEFKQ…ENAIHARPET (318 aa)) are ribokinase. 195–198 (NMSE) is an ATP binding site. Asp-264 is a catalytic residue. Residues 344 to 476 (MTNGCFDILH…VIEKIKLLKD (133 aa)) are cytidylyltransferase.

In the N-terminal section; belongs to the carbohydrate kinase PfkB family. This sequence in the C-terminal section; belongs to the cytidylyltransferase family. In terms of assembly, homodimer.

It catalyses the reaction D-glycero-beta-D-manno-heptose 7-phosphate + ATP = D-glycero-beta-D-manno-heptose 1,7-bisphosphate + ADP + H(+). The catalysed reaction is D-glycero-beta-D-manno-heptose 1-phosphate + ATP + H(+) = ADP-D-glycero-beta-D-manno-heptose + diphosphate. Its pathway is nucleotide-sugar biosynthesis; ADP-L-glycero-beta-D-manno-heptose biosynthesis; ADP-L-glycero-beta-D-manno-heptose from D-glycero-beta-D-manno-heptose 7-phosphate: step 1/4. It participates in nucleotide-sugar biosynthesis; ADP-L-glycero-beta-D-manno-heptose biosynthesis; ADP-L-glycero-beta-D-manno-heptose from D-glycero-beta-D-manno-heptose 7-phosphate: step 3/4. It functions in the pathway bacterial outer membrane biogenesis; LOS core biosynthesis. Functionally, catalyzes the phosphorylation of D-glycero-D-manno-heptose 7-phosphate at the C-1 position to selectively form D-glycero-beta-D-manno-heptose-1,7-bisphosphate. Its function is as follows. Catalyzes the ADP transfer from ATP to D-glycero-beta-D-manno-heptose 1-phosphate, yielding ADP-D-glycero-beta-D-manno-heptose. This is Bifunctional protein HldE from Haemophilus influenzae (strain ATCC 51907 / DSM 11121 / KW20 / Rd).